The primary structure comprises 207 residues: Ribosomal RNA small subunit methyltransferase G (207 aa).

Residues Gly-76, Gln-81, 127–128, and Arg-141 each bind S-adenosyl-L-methionine; that span reads VE.

The protein belongs to the methyltransferase superfamily. RNA methyltransferase RsmG family.

Its subcellular location is the cytoplasm. The catalysed reaction is guanosine(527) in 16S rRNA + S-adenosyl-L-methionine = N(7)-methylguanosine(527) in 16S rRNA + S-adenosyl-L-homocysteine. In terms of biological role, specifically methylates the N7 position of guanine in position 527 of 16S rRNA. The sequence is that of Ribosomal RNA small subunit methyltransferase G from Neisseria meningitidis serogroup C (strain 053442).